The following is a 217-amino-acid chain: Large ribosomal subunit protein uL29m (217 aa).

This sequence belongs to the universal ribosomal protein uL29 family. Component of the mitochondrial large ribosomal subunit. Mature mitochondrial ribosomes consist of a small (37S) and a large (54S) subunit. The 37S subunit contains at least 33 different proteins and 1 molecule of RNA (15S). The 54S subunit contains at least 45 different proteins and 1 molecule of RNA (21S).

It localises to the mitochondrion. In Neosartorya fischeri (strain ATCC 1020 / DSM 3700 / CBS 544.65 / FGSC A1164 / JCM 1740 / NRRL 181 / WB 181) (Aspergillus fischerianus), this protein is Large ribosomal subunit protein uL29m (mrpl4).